We begin with the raw amino-acid sequence, 534 residues long: Anther-specific proline-rich protein APG (534 aa).

A signal peptide spans 1 to 35; the sequence is MKRSSLVDSCSYSRIFRSIFCLLSFCIFFLTTTNA. Positions 59–196 are enriched in pro residues; that stretch reads NPPTPDPSPK…SPKPAPSPPK (138 aa). A disordered region spans residues 59–202; the sequence is NPPTPDPSPK…SPPKPENKTI (144 aa). The Nucleophile role is filled by serine 211. Catalysis depends on residues aspartate 508 and histidine 511.

It belongs to the 'GDSL' lipolytic enzyme family. Found in sporophytic and gametophytic cell types in the anther, only in male fertile plants.

This is Anther-specific proline-rich protein APG (APG) from Arabidopsis thaliana (Mouse-ear cress).